A 451-amino-acid chain; its full sequence is Uronate isomerase (451 aa).

It belongs to the metallo-dependent hydrolases superfamily. Uronate isomerase family.

It catalyses the reaction D-glucuronate = D-fructuronate. The enzyme catalyses aldehydo-D-galacturonate = keto-D-tagaturonate. It participates in carbohydrate metabolism; pentose and glucuronate interconversion. The chain is Uronate isomerase from Thermotoga petrophila (strain ATCC BAA-488 / DSM 13995 / JCM 10881 / RKU-1).